A 161-amino-acid polypeptide reads, in one-letter code: RNA pyrophosphohydrolase (161 aa).

Residues 12–154 (PYRPGVGMMI…KRKLYQAVVK (143 aa)) form the Nudix hydrolase domain. Positions 46 to 67 (GGIVPGETPSIAAMREMLEEIG) match the Nudix box motif.

Belongs to the Nudix hydrolase family. RppH subfamily. The cofactor is a divalent metal cation.

In terms of biological role, accelerates the degradation of transcripts by removing pyrophosphate from the 5'-end of triphosphorylated RNA, leading to a more labile monophosphorylated state that can stimulate subsequent ribonuclease cleavage. The sequence is that of RNA pyrophosphohydrolase from Rickettsia africae (strain ESF-5).